Here is a 259-residue protein sequence, read N- to C-terminus: Peroxisomal membrane protein 11B (259 aa).

Lys43 is subject to N6-acetyllysine. The segment at 211–259 (VVRNACDLFIPLDKLGLWRCGPGIVGLCGLVSSILSILTLIYPWLRLKP) is interaction with PEX19, PEX11G and FIS1 and peroxisome targeting. A helical membrane pass occupies residues 234 to 254 (IVGLCGLVSSILSILTLIYPW).

The protein belongs to the peroxin-11 family. In terms of assembly, homodimer. Heterodimer with PEX11G. Interacts with PEX19. Interacts with FIS1.

The protein resides in the peroxisome membrane. Its function is as follows. Involved in peroxisomal proliferation. May regulate peroxisome division by recruiting the dynamin-related GTPase DNM1L to the peroxisomal membrane. Promotes membrane protrusion and elongation on the peroxisomal surface. This is Peroxisomal membrane protein 11B (PEX11B) from Pongo abelii (Sumatran orangutan).